Here is a 197-residue protein sequence, read N- to C-terminus: Ribonuclease HII (197 aa).

Residues 14–197 (EKIVGIDEAG…RSFNLGVNDD (184 aa)) enclose the RNase H type-2 domain. 3 residues coordinate a divalent metal cation: Asp-20, Glu-21, and Asp-112.

Belongs to the RNase HII family. Mn(2+) is required as a cofactor. Mg(2+) serves as cofactor.

It is found in the cytoplasm. The catalysed reaction is Endonucleolytic cleavage to 5'-phosphomonoester.. Endonuclease that specifically degrades the RNA of RNA-DNA hybrids. The chain is Ribonuclease HII from Sulfurihydrogenibium sp. (strain YO3AOP1).